Here is a 163-residue protein sequence, read N- to C-terminus: Phosphopantetheine adenylyltransferase (163 aa).

T9 is a substrate binding site. Residues 9–10 (TF) and H17 contribute to the ATP site. Substrate-binding residues include K41, T73, and R87. ATP is bound by residues 88–90 (GLR), E98, and 123–129 (FSFISSS).

Belongs to the bacterial CoaD family. Homohexamer. Mg(2+) serves as cofactor.

It is found in the cytoplasm. The catalysed reaction is (R)-4'-phosphopantetheine + ATP + H(+) = 3'-dephospho-CoA + diphosphate. It participates in cofactor biosynthesis; coenzyme A biosynthesis; CoA from (R)-pantothenate: step 4/5. Reversibly transfers an adenylyl group from ATP to 4'-phosphopantetheine, yielding dephospho-CoA (dPCoA) and pyrophosphate. This is Phosphopantetheine adenylyltransferase from Desulfitobacterium hafniense (strain Y51).